The primary structure comprises 240 residues: Glutathione S-transferase theta-1 (240 aa).

The region spanning 2–82 (VLELYLDLLS…YLAHKYKVPD (81 aa)) is the GST N-terminal domain. Glutathione contacts are provided by residues H40, 53-54 (RV), and 66-67 (ES). Residues 88–222 (DLQARARVDE…VILKVKDCPP (135 aa)) form the GST C-terminal domain.

This sequence belongs to the GST superfamily. Theta family. In terms of assembly, homodimer. In liver, highest expression found in central vein limiting plate hepatocytes. Also expressed in interlobular bile duct epithelial cells. In lung, expressed in club cells and ciliated cells of the bronchiolar epithelium and in type II alveolar cells of the lung parenchyma.

The protein resides in the cytoplasm. It localises to the nucleus. The catalysed reaction is RX + glutathione = an S-substituted glutathione + a halide anion + H(+). Conjugation of reduced glutathione to a wide number of exogenous and endogenous hydrophobic electrophiles. Also binds steroids, bilirubin, carcinogens and numerous organic anions. Has dichloromethane dehalogenase activity. This chain is Glutathione S-transferase theta-1 (Gstt1), found in Mus musculus (Mouse).